Reading from the N-terminus, the 721-residue chain is Fatty acid oxidation complex subunit alpha (721 aa).

An enoyl-CoA hydratase/isomerase region spans residues 1-190 (MIYEGKAITV…KVGAVDAVVA (190 aa)). Asp297 contacts substrate. The segment at 312-721 (KDVKQAAVLG…SFFGQASSEE (410 aa)) is 3-hydroxyacyl-CoA dehydrogenase. Residues Met325, Asp344, 401 to 403 (VVE), Lys408, and Ser430 each bind NAD(+). His451 functions as the For 3-hydroxyacyl-CoA dehydrogenase activity in the catalytic mechanism. Asn454 contacts NAD(+). Substrate-binding residues include Asn501 and Tyr660.

This sequence in the N-terminal section; belongs to the enoyl-CoA hydratase/isomerase family. In the C-terminal section; belongs to the 3-hydroxyacyl-CoA dehydrogenase family. In terms of assembly, heterotetramer of two alpha chains (FadB) and two beta chains (FadA).

The enzyme catalyses a (3S)-3-hydroxyacyl-CoA + NAD(+) = a 3-oxoacyl-CoA + NADH + H(+). It catalyses the reaction a (3S)-3-hydroxyacyl-CoA = a (2E)-enoyl-CoA + H2O. It carries out the reaction a 4-saturated-(3S)-3-hydroxyacyl-CoA = a (3E)-enoyl-CoA + H2O. The catalysed reaction is (3S)-3-hydroxybutanoyl-CoA = (3R)-3-hydroxybutanoyl-CoA. The enzyme catalyses a (3Z)-enoyl-CoA = a 4-saturated (2E)-enoyl-CoA. It catalyses the reaction a (3E)-enoyl-CoA = a 4-saturated (2E)-enoyl-CoA. The protein operates within lipid metabolism; fatty acid beta-oxidation. Its function is as follows. Involved in the aerobic and anaerobic degradation of long-chain fatty acids via beta-oxidation cycle. Catalyzes the formation of 3-oxoacyl-CoA from enoyl-CoA via L-3-hydroxyacyl-CoA. It can also use D-3-hydroxyacyl-CoA and cis-3-enoyl-CoA as substrate. This Pseudomonas savastanoi pv. phaseolicola (strain 1448A / Race 6) (Pseudomonas syringae pv. phaseolicola (strain 1448A / Race 6)) protein is Fatty acid oxidation complex subunit alpha.